The sequence spans 246 residues: MTTLLISDLHLHTGQPDITRGFLDYLERDARHADTLYLLGDIFEAWIGDDYLGDLERQVIEALRRLSDAGTQLYFMHGNRDFLVGEDFAAAAGATLLDDPCLATLGRQTVLLMHGDSLCTGDEEYMKFRAMARDPEWQAQILALPIEQRLELAKSLRMQSSDANTQKADAIMDVTPAEVEAIMREHGVSTLIHGHTHRPAVHEFTLDGQPAQRIVLGDWRPGRGWEVRVEDDAPPRLREFAFQARA.

Mn(2+)-binding residues include Asp8, His10, Asp41, Asn79, and His114. 79–80 (NR) lines the substrate pocket. Positions 122, 160, 164, 167, and 195 each coordinate substrate. Residues His195 and His197 each contribute to the Mn(2+) site.

Belongs to the LpxH family. Mn(2+) serves as cofactor.

It is found in the cell inner membrane. It catalyses the reaction UDP-2-N,3-O-bis[(3R)-3-hydroxytetradecanoyl]-alpha-D-glucosamine + H2O = 2-N,3-O-bis[(3R)-3-hydroxytetradecanoyl]-alpha-D-glucosaminyl 1-phosphate + UMP + 2 H(+). It functions in the pathway glycolipid biosynthesis; lipid IV(A) biosynthesis; lipid IV(A) from (3R)-3-hydroxytetradecanoyl-[acyl-carrier-protein] and UDP-N-acetyl-alpha-D-glucosamine: step 4/6. In terms of biological role, hydrolyzes the pyrophosphate bond of UDP-2,3-diacylglucosamine to yield 2,3-diacylglucosamine 1-phosphate (lipid X) and UMP by catalyzing the attack of water at the alpha-P atom. Involved in the biosynthesis of lipid A, a phosphorylated glycolipid that anchors the lipopolysaccharide to the outer membrane of the cell. In Chromohalobacter salexigens (strain ATCC BAA-138 / DSM 3043 / CIP 106854 / NCIMB 13768 / 1H11), this protein is UDP-2,3-diacylglucosamine hydrolase.